A 157-amino-acid chain; its full sequence is Small ribosomal subunit protein uS7cz/uS7cy (157 aa).

It belongs to the universal ribosomal protein uS7 family. In terms of assembly, part of the 30S ribosomal subunit.

Its subcellular location is the plastid. The protein localises to the chloroplast. Functionally, one of the primary rRNA binding proteins, it binds directly to 16S rRNA where it nucleates assembly of the head domain of the 30S subunit. The protein is Small ribosomal subunit protein uS7cz/uS7cy (rps7-A) of Welwitschia mirabilis (Tree tumbo).